A 1057-amino-acid chain; its full sequence is Carbamoyl phosphate synthase large chain (1057 aa).

The carboxyphosphate synthetic domain stretch occupies residues 1–401 (MPKRNDIKTI…SLLKAIRSLE (401 aa)). Arginine 129, arginine 169, glycine 175, glycine 176, lysine 208, isoleucine 210, glutamate 215, glycine 241, isoleucine 242, histidine 243, glutamine 284, and glutamate 298 together coordinate ATP. In terms of domain architecture, ATP-grasp 1 spans 133 to 327 (RTLMNDLNVP…IAKLAAKIAV (195 aa)). Mg(2+) is bound by residues glutamine 284, glutamate 298, and asparagine 300. Mn(2+) is bound by residues glutamine 284, glutamate 298, and asparagine 300. An oligomerization domain region spans residues 402–546 (YGVHHLGLPN…YGTYETENES (145 aa)). The interval 547-929 (IVTDKEKILV…ALFKGLTGSG (383 aa)) is carbamoyl phosphate synthetic domain. One can recognise an ATP-grasp 2 domain in the interval 671 to 861 (EALLRKINVP…MAQLAMRAII (191 aa)). ATP-binding residues include arginine 707, arginine 746, leucine 748, glutamate 752, glycine 777, valine 778, histidine 779, serine 780, glutamine 820, and glutamate 832. 3 residues coordinate Mg(2+): glutamine 820, glutamate 832, and asparagine 834. 3 residues coordinate Mn(2+): glutamine 820, glutamate 832, and asparagine 834. Residues 930–1057 (VEVKDHGTVL…ESMTFTMRQM (128 aa)) enclose the MGS-like domain. Positions 930-1057 (VEVKDHGTVL…ESMTFTMRQM (128 aa)) are allosteric domain.

Belongs to the CarB family. Composed of two chains; the small (or glutamine) chain promotes the hydrolysis of glutamine to ammonia, which is used by the large (or ammonia) chain to synthesize carbamoyl phosphate. Tetramer of heterodimers (alpha,beta)4. Mg(2+) is required as a cofactor. Mn(2+) serves as cofactor.

It carries out the reaction hydrogencarbonate + L-glutamine + 2 ATP + H2O = carbamoyl phosphate + L-glutamate + 2 ADP + phosphate + 2 H(+). The catalysed reaction is hydrogencarbonate + NH4(+) + 2 ATP = carbamoyl phosphate + 2 ADP + phosphate + 2 H(+). It participates in amino-acid biosynthesis; L-arginine biosynthesis; carbamoyl phosphate from bicarbonate: step 1/1. The protein operates within pyrimidine metabolism; UMP biosynthesis via de novo pathway; (S)-dihydroorotate from bicarbonate: step 1/3. In terms of biological role, large subunit of the glutamine-dependent carbamoyl phosphate synthetase (CPSase). CPSase catalyzes the formation of carbamoyl phosphate from the ammonia moiety of glutamine, carbonate, and phosphate donated by ATP, constituting the first step of 2 biosynthetic pathways, one leading to arginine and/or urea and the other to pyrimidine nucleotides. The large subunit (synthetase) binds the substrates ammonia (free or transferred from glutamine from the small subunit), hydrogencarbonate and ATP and carries out an ATP-coupled ligase reaction, activating hydrogencarbonate by forming carboxy phosphate which reacts with ammonia to form carbamoyl phosphate. This Staphylococcus aureus (strain Mu3 / ATCC 700698) protein is Carbamoyl phosphate synthase large chain.